The chain runs to 123 residues: ATP synthase epsilon chain (123 aa).

It belongs to the ATPase epsilon chain family. As to quaternary structure, F-type ATPases have 2 components, CF(1) - the catalytic core - and CF(0) - the membrane proton channel. CF(1) has five subunits: alpha(3), beta(3), gamma(1), delta(1), epsilon(1). CF(0) has three main subunits: a, b and c.

The protein resides in the cell inner membrane. Produces ATP from ADP in the presence of a proton gradient across the membrane. This chain is ATP synthase epsilon chain, found in Helicobacter pylori (strain Shi470).